The chain runs to 130 residues: Small ribosomal subunit protein uS11 (130 aa).

This sequence belongs to the universal ribosomal protein uS11 family. In terms of assembly, part of the 30S ribosomal subunit. Interacts with proteins S7 and S18. Binds to IF-3.

Functionally, located on the platform of the 30S subunit, it bridges several disparate RNA helices of the 16S rRNA. Forms part of the Shine-Dalgarno cleft in the 70S ribosome. The polypeptide is Small ribosomal subunit protein uS11 (Caldanaerobacter subterraneus subsp. tengcongensis (strain DSM 15242 / JCM 11007 / NBRC 100824 / MB4) (Thermoanaerobacter tengcongensis)).